The following is a 507-amino-acid chain: Sperm-associated antigen 6 (507 aa).

ARM repeat units follow at residues P31 to N70, D73 to K112, P115 to R154, T157 to K196, P199 to K238, V241 to K280, E325 to R365, and K402 to P441.

Interacts with SPAG16 and SPAG17. As to expression, highly expressed in testis. Not detected in prostate, ovary, spleen, thymus, small intestine, colon and peripheral blood leukocytes.

The protein localises to the cytoplasm. The protein resides in the cytoskeleton. Its subcellular location is the cell projection. It localises to the cilium. It is found in the flagellum. The protein localises to the cilium axoneme. Important for structural integrity of the central apparatus in the sperm tail and for flagellar motility. In Mus musculus (Mouse), this protein is Sperm-associated antigen 6 (Spag6).